A 291-amino-acid polypeptide reads, in one-letter code: DegV domain-containing protein CPE0026 (291 aa).

Residues 4–286 enclose the DegV domain; sequence FVIFTDSAAD…IGTLAVFFLG (283 aa). 2 residues coordinate hexadecanoate: T63 and S95.

Functionally, may bind long-chain fatty acids, such as palmitate, and may play a role in lipid transport or fatty acid metabolism. The chain is DegV domain-containing protein CPE0026 from Clostridium perfringens (strain 13 / Type A).